Here is a 241-residue protein sequence, read N- to C-terminus: MKHKIRLGVNVDHVATLRQVRGGTTAYPNLLDMVKKSVKGGAEQITIHLREDRRHIQLEDLKVLSKHCSVPLNLEMAATSQMVTYAKKYRPDWVCFVPEKRAELTTEGGLDVKKGFKKMFPMVEKLQRIGIEISMFIEPSLEQVEASYEIGADAVEFHTGKWVMLKGARKAAEWKRLCDAAEWAHYLGLNVHAGHGLDYEHSKLINKLPHLQEVNIGHSLVCYALEHGMEESVRKMRKILK.

Position 10 (Asn10) interacts with 3-amino-2-oxopropyl phosphate. Position 12–13 (12–13) interacts with 1-deoxy-D-xylulose 5-phosphate; that stretch reads DH. 3-amino-2-oxopropyl phosphate is bound at residue Arg21. The active-site Proton acceptor is the His48. Residues Arg50 and His55 each coordinate 1-deoxy-D-xylulose 5-phosphate. The Proton acceptor role is filled by Glu75. A 1-deoxy-D-xylulose 5-phosphate-binding site is contributed by Thr105. The Proton donor role is filled by His195. 3-amino-2-oxopropyl phosphate-binding positions include Gly196 and 217-218; that span reads GH.

The protein belongs to the PNP synthase family. In terms of assembly, homooctamer; tetramer of dimers.

Its subcellular location is the cytoplasm. The enzyme catalyses 3-amino-2-oxopropyl phosphate + 1-deoxy-D-xylulose 5-phosphate = pyridoxine 5'-phosphate + phosphate + 2 H2O + H(+). The protein operates within cofactor biosynthesis; pyridoxine 5'-phosphate biosynthesis; pyridoxine 5'-phosphate from D-erythrose 4-phosphate: step 5/5. Catalyzes the complicated ring closure reaction between the two acyclic compounds 1-deoxy-D-xylulose-5-phosphate (DXP) and 3-amino-2-oxopropyl phosphate (1-amino-acetone-3-phosphate or AAP) to form pyridoxine 5'-phosphate (PNP) and inorganic phosphate. This chain is Pyridoxine 5'-phosphate synthase, found in Bdellovibrio bacteriovorus (strain ATCC 15356 / DSM 50701 / NCIMB 9529 / HD100).